A 231-amino-acid polypeptide reads, in one-letter code: Cytochrome c oxidase assembly factor 7 (231 aa).

Sel1-like repeat units follow at residues 34 to 66, 68 to 104, 108 to 145, 146 to 182, and 183 to 218; these read PDGCNRLAEYLENIKKNFESAAQILKINCDQNE, SESCYKLGAYYVTGKGGLPVDLKAAYGCFLKSCNKGG, IDSCHNVGLLSHDGRVNDDKPDALKARDYYNKACDGNF, AASCFNLSAIYLQGAPGIPKDMNMALHFSEKACSLGH, and MWGCANASRMYKLGDGVAKNDEKAESLKNKARDLHR.

It belongs to the hcp beta-lactamase family.

The protein resides in the mitochondrion intermembrane space. Functionally, may be required for assembly of mitochondrial respiratory chain complexes. This chain is Cytochrome c oxidase assembly factor 7 (coa7), found in Xenopus tropicalis (Western clawed frog).